A 367-amino-acid polypeptide reads, in one-letter code: Protein SGT1 homolog (367 aa).

3 TPR repeats span residues 6-39, 40-73, and 75-107; these read ASDL…SPAT, AELY…DPSM, and KAYL…ASGD. Residues 165-254 enclose the CS domain; sequence KPKYRHDFYN…AEQITWTSLD (90 aa). 2 disordered regions span residues 261-289 and 347-367; these read AVPQ…DWDK and VGSK…KWEY. Residues 277-367 form the SGS domain; sequence SYPSSKSKKD…DGMELKKWEY (91 aa).

Belongs to the SGT1 family. In terms of assembly, interacts (via CS domain) with RAR1 (via CHORD 2 domain). Interacts with RAD6. In terms of tissue distribution, expressed in roots, root tips, shoot apical meristem (SAM), young leaves, flag leaves and ears.

It is found in the cytoplasm. Its subcellular location is the nucleus. Involved in basal disease resistance to bacterial blight (X.oryzae). May act as positive regulator of basal defense. Probably required for SCF-mediated ubiquitination, by coupling HSP90 to SCF complex for ubiquitination of HSP90 client proteins. In Oryza sativa subsp. japonica (Rice), this protein is Protein SGT1 homolog.